A 639-amino-acid polypeptide reads, in one-letter code: MKDITKQKFSRNKLVEMISFALGNLGHAAFYGALSTYFIVYVTSGMFDGLPQSVANKLIGLITALVVIIRLAEVIIDPILGNIVDNTKTRWGKFKPWQVIGAVVSSVLLVVIFTGIFGLAHINWIAFAIVFTVLFILLDIFYSFADVAYWGMVPAISEDSKERGIFTSLGSFTGSIGWNGLTMIVVPVTTYFTFIATGKHEQGPSGWFGFSIVVSIVAVLSALAVAFGTKEKDNLIRNAATKKTSIKDVFSGIIHNDQILWISLAYLMYSLAYVVTNGVLFYFFKFVLGKPNEFWIAGAIATVIGFSTAPLYPVLNKFITRKVLFSIGQMAMILSYLFFIFGKTNMMMVTIGLILFNFTFAQLVVVLSLTDSIEYGQLKNGNRNEAVVLAVRPMLDKITGAFSNGLVGAIAITAGMTGSATAGDISASKINTFEIYAFYTPLLFSILALVIFLWKVKITEKKHAEIVIELEKTLSSGAKKANTSEVNVELEEIFAPASGQKKLLNEVDGNTLTGIGFAIDPEEGNLFAPFDGKVDFTFSTKHVLGVVSNNGLKAIIHVGIGTINMRGAGFVSHYVDGQLFKKGDLLMTFDKKLITKNGYQDDIIMYFTQPENIIDVQQIDNRVVKQGEKIAKLTFRSER.

The permease stretch occupies residues 1–473 (MKDITKQKFS…AEIVIELEKT (473 aa)). 12 helical membrane passes run 20 to 40 (FALG…YFIV), 59 to 79 (IGLI…IDPI), 99 to 119 (VIGA…IFGL), 124 to 144 (WIAF…FYSF), 176 to 196 (IGWN…TFIA), 207 to 227 (WFGF…AVAF), 264 to 284 (LAYL…FYFF), 294 to 314 (FWIA…LYPV), 322 to 342 (KVLF…FIFG), 347 to 367 (MMVT…VVVL), 398 to 418 (ITGA…GMTG), and 433 to 453 (FEIY…VIFL). Residues 505-609 (NEVDGNTLTG…QDDIIMYFTQ (105 aa)) form the PTS EIIA type-1 domain. His-557 is subject to Phosphohistidine; by HPr.

This sequence in the N-terminal section; belongs to the sodium:galactoside symporter (TC 2.A.2) family.

It is found in the cell membrane. Its function is as follows. Responsible for transport of beta-galactosides into the cell, with the concomitant uptake of protons (symport system), and also for transport of homologous and heterologous exchange of beta-galactosides. This is Lactose permease (lacS) from Leuconostoc lactis.